Consider the following 630-residue polypeptide: Mannosyl-oligosaccharide 1,2-alpha-mannosidase IC (630 aa).

The Cytoplasmic portion of the chain corresponds to 1–22 (MLMRKVPGFVPASPWGLRLPQK). A helical; Signal-anchor for type II membrane protein membrane pass occupies residues 23–43 (FLFLLFLSGLVTLCFGALFLL). Residues 44–630 (PHSSRLKRLF…DSSGRAWGRH (587 aa)) lie on the Lumenal side of the membrane. The interval 74 to 140 (PAREQEPPPN…ASRPGDEGVP (67 aa)) is disordered. Pro residues predominate over residues 80-89 (PPPNPAPAAP). The span at 102-113 (PRRRKGGLRRTR) shows a compositional bias: basic residues. At Ser164 the chain carries Phosphoserine. Asn250 carries N-linked (GlcNAc...) asparagine glycosylation. Residues Cys453 and Cys485 are joined by a disulfide bond. The active-site Proton donor is the Glu499. Ca(2+) is bound at residue Thr610. The N-linked (GlcNAc...) asparagine glycan is linked to Asn618.

Belongs to the glycosyl hydrolase 47 family. Requires Ca(2+) as cofactor. Expressed in most tissues with the exception of lung, muscle and pancreas. Highly expressed in placenta.

The protein resides in the golgi apparatus membrane. It catalyses the reaction N(4)-(alpha-D-Man-(1-&gt;2)-alpha-D-Man-(1-&gt;2)-alpha-D-Man-(1-&gt;3)-[alpha-D-Man-(1-&gt;2)-alpha-D-Man-(1-&gt;3)-[alpha-D-Man-(1-&gt;2)-alpha-D-Man-(1-&gt;6)]-alpha-D-Man-(1-&gt;6)]-beta-D-Man-(1-&gt;4)-beta-D-GlcNAc-(1-&gt;4)-beta-D-GlcNAc)-L-asparaginyl-[protein] (N-glucan mannose isomer 9A1,2,3B1,2,3) + 4 H2O = N(4)-(alpha-D-Man-(1-&gt;3)-[alpha-D-Man-(1-&gt;3)-[alpha-D-Man-(1-&gt;6)]-alpha-D-Man-(1-&gt;6)]-beta-D-Man-(1-&gt;4)-beta-D-GlcNAc-(1-&gt;4)-beta-D-GlcNAc)-L-asparaginyl-[protein] (N-glucan mannose isomer 5A1,2) + 4 beta-D-mannose. It carries out the reaction N(4)-(alpha-D-Man-(1-&gt;2)-alpha-D-Man-(1-&gt;2)-alpha-D-Man-(1-&gt;3)-[alpha-D-Man-(1-&gt;3)-[alpha-D-Man-(1-&gt;2)-alpha-D-Man-(1-&gt;6)]-alpha-D-Man-(1-&gt;6)]-beta-D-Man-(1-&gt;4)-beta-D-GlcNAc-(1-&gt;4)-beta-D-GlcNAc)-L-asparaginyl-[protein] (N-glucan mannose isomer 8A1,2,3B1,3) + 3 H2O = N(4)-(alpha-D-Man-(1-&gt;3)-[alpha-D-Man-(1-&gt;3)-[alpha-D-Man-(1-&gt;6)]-alpha-D-Man-(1-&gt;6)]-beta-D-Man-(1-&gt;4)-beta-D-GlcNAc-(1-&gt;4)-beta-D-GlcNAc)-L-asparaginyl-[protein] (N-glucan mannose isomer 5A1,2) + 3 beta-D-mannose. It functions in the pathway protein modification; protein glycosylation. Inhibited by both 1-deoxymannojirimycin and kifunensine. Involved in the maturation of Asn-linked oligosaccharides. Trim alpha-1,2-linked mannose residues from Man(9)GlcNAc(2) to produce first Man(8)GlcNAc(2) then Man(6)GlcNAc and a small amount of Man(5)GlcNAc. This chain is Mannosyl-oligosaccharide 1,2-alpha-mannosidase IC (MAN1C1), found in Homo sapiens (Human).